The chain runs to 341 residues: MKKQIFNEENVSIEKKIEPKQEFDATKVSVEDETEQLTAELIIEKGFTPSRFWIRGLLAVLVLFGLAVIARSVQCLIDSVQAHQWIDLAFAIVFFMVSLAGIGAIIREWYWLVYLRKHQDTQHISKQLLMDELLVTSGQDNVVICHQILADLKSLPHIAVAKQRWQSQLNEAYNAKEVLYLFSENVLKPLDTQVKQIIAKSATENAIIVAVSPLVIVDMLMIAWRNIALVNKISRLYGMRLGYLSRLKLFKMVLTNMVFAGATEMATDVGMDFFSQNLTAKVSLRAAQGIGVGLLTARLGIKAMEFCRPIAFQKEERPKISEIRQQLLIAVKNRFFAKNEA.

3 consecutive transmembrane segments (helical) span residues 57–77, 86–106, and 204–224; these read LLAV…QCLI, IDLA…GAII, and ENAI…MIAW.

Belongs to the UPF0283 family.

Its subcellular location is the cell inner membrane. In Haemophilus ducreyi (strain 35000HP / ATCC 700724), this protein is UPF0283 membrane protein HD_1769.